The following is a 503-amino-acid chain: Maturase K (503 aa).

This sequence belongs to the intron maturase 2 family. MatK subfamily.

Its subcellular location is the plastid. It is found in the chloroplast. In terms of biological role, usually encoded in the trnK tRNA gene intron. Probably assists in splicing its own and other chloroplast group II introns. The sequence is that of Maturase K from Backhousia subargentea (Giant ironwood).